The primary structure comprises 212 residues: Glycerol-3-phosphate acyltransferase (212 aa).

5 consecutive transmembrane segments (helical) span residues 3–23 (ILLAALVAYLIGSVSFAVVVS), 51–71 (KAAILTLVGDAFKGWLAVWLA), 78–98 (DVAVAWVAIAVFLGHLYPVFF), 115–135 (AVHPVLGLATALTWLIVAFFF), and 139–159 (SLAALVAAVFAPLFDVFLFGT).

It belongs to the PlsY family. As to quaternary structure, probably interacts with PlsX.

Its subcellular location is the cell inner membrane. The catalysed reaction is an acyl phosphate + sn-glycerol 3-phosphate = a 1-acyl-sn-glycero-3-phosphate + phosphate. It functions in the pathway lipid metabolism; phospholipid metabolism. Catalyzes the transfer of an acyl group from acyl-phosphate (acyl-PO(4)) to glycerol-3-phosphate (G3P) to form lysophosphatidic acid (LPA). This enzyme utilizes acyl-phosphate as fatty acyl donor, but not acyl-CoA or acyl-ACP. The polypeptide is Glycerol-3-phosphate acyltransferase (Burkholderia ambifaria (strain MC40-6)).